We begin with the raw amino-acid sequence, 319 residues long: uncharacterized protein (319 aa).

An N-terminal signal peptide occupies residues 1–27 (MYKKFVPFAVFLFLFFVSFEMMENPHA). The NodB homology domain occupies 130-306 (PMVAFLINVA…QIKDKGYALG (177 aa)).

The protein belongs to the polysaccharide deacetylase family.

This is an uncharacterized protein from Bacillus subtilis (strain 168).